Reading from the N-terminus, the 384-residue chain is Guanine nucleotide-binding protein alpha-1 subunit (384 aa).

Residue glycine 2 is the site of N-myristoyl glycine attachment. Cysteine 5 carries S-palmitoyl cysteine lipidation. The region spanning 38–384 (HIRKLLLLGA…RRNLFEAGLL (347 aa)) is the G-alpha domain. Positions 41-54 (KLLLLGAGESGKST) are G1 motif. Residues glutamate 49, serine 50, glycine 51, lysine 52, serine 53, threonine 54, aspartate 163, leucine 188, threonine 194, glycine 222, asparagine 288, lysine 289, aspartate 291, and alanine 356 each contribute to the GTP site. Serine 53 is a binding site for Mg(2+). The segment at 186–194 (DVLLARVRT) is G2 motif. Threonine 194 lines the Mg(2+) pocket. The segment at 215-224 (YRLFDVGGQR) is G3 motif. Residues 284–291 (MLFLNKFD) form a G4 motif region. A G5 motif region spans residues 354 to 359 (TTALDQ).

The protein belongs to the G-alpha family. In terms of assembly, g proteins are composed of 3 units; alpha, beta and gamma. The alpha chain contains the guanine nucleotide binding site. Requires Mg(2+) as cofactor.

Its function is as follows. Guanine nucleotide-binding proteins (G proteins) are involved as modulators or transducers in various transmembrane signaling systems. The chain is Guanine nucleotide-binding protein alpha-1 subunit (GPA1) from Pisum sativum (Garden pea).